We begin with the raw amino-acid sequence, 256 residues long: Undecaprenyl-diphosphatase 2 (256 aa).

8 helical membrane-spanning segments follow: residues 1-21 (MDIF…FLPI), 38-58 (ATAT…LAVL), 70-90 (LNLW…AFIF), 97-117 (LFNV…FLLL), 134-154 (VTYK…IPGT), 175-195 (AEFS…YDLL), 208-228 (ALAV…KLFI), and 236-256 (FVSF…IAYV).

The protein belongs to the UppP family.

It localises to the cell inner membrane. It catalyses the reaction di-trans,octa-cis-undecaprenyl diphosphate + H2O = di-trans,octa-cis-undecaprenyl phosphate + phosphate + H(+). Functionally, catalyzes the dephosphorylation of undecaprenyl diphosphate (UPP). Confers resistance to bacitracin. This is Undecaprenyl-diphosphatase 2 from Pseudoalteromonas translucida (strain TAC 125).